The chain runs to 264 residues: Hydroxyethylthiazole kinase (264 aa).

Position 52 (Met52) interacts with substrate. ATP is bound by residues Arg127 and Thr173. Residue Gly200 coordinates substrate.

This sequence belongs to the Thz kinase family. Mg(2+) serves as cofactor.

The catalysed reaction is 5-(2-hydroxyethyl)-4-methylthiazole + ATP = 4-methyl-5-(2-phosphooxyethyl)-thiazole + ADP + H(+). It functions in the pathway cofactor biosynthesis; thiamine diphosphate biosynthesis; 4-methyl-5-(2-phosphoethyl)-thiazole from 5-(2-hydroxyethyl)-4-methylthiazole: step 1/1. Functionally, catalyzes the phosphorylation of the hydroxyl group of 4-methyl-5-beta-hydroxyethylthiazole (THZ). The sequence is that of Hydroxyethylthiazole kinase from Serratia proteamaculans (strain 568).